The primary structure comprises 316 residues: Golgi to ER traffic protein 2 (316 aa).

The tract at residues 1-75 (MATELSDAEK…SDEEVEKSTK (75 aa)) is disordered. Residues 1–167 (MATELSDAEK…LKYYKFKVSK (167 aa)) are Cytoplasmic-facing. The span at 7–19 (DAEKRKLLRERRQ) shows a compositional bias: basic and acidic residues. Polar residues-rich tracts occupy residues 22 to 48 (FSNG…STSV) and 56 to 65 (PSGNKKSSNV). The chain crosses the membrane as a helical span at residues 168 to 187 (LKSYIILIKWALLAPYVYFI). Over 188-209 (MHPNPTVLQASNLLSQIVERSN) the chain is Lumenal. A helical membrane pass occupies residues 210-229 (FFSIFTGLEIVFISIYYQML). Over 230–276 (KKLQRDNNVTATQNAGGILKYLTMIPEGILPIRNIQGKIGLALEYFD) the chain is Cytoplasmic. Residues 277–297 (VASMYVTDICFVLVLFGVMKY) form a helical membrane-spanning segment. Topologically, residues 298-316 (YHSSFPISVPIEPPIAGIQ) are lumenal.

The protein belongs to the GET2 family. Component of the Golgi to ER traffic (GET) complex, which is composed of GET1, GET2 and GET3. Within the complex, GET1 and GET2 form a heterotetramer which is stabilized by phosphatidylinositol binding and which binds to the GET3 homodimer.

It localises to the endoplasmic reticulum membrane. Its subcellular location is the golgi apparatus membrane. In terms of biological role, required for the post-translational delivery of tail-anchored (TA) proteins to the endoplasmic reticulum. Together with GET1, acts as a membrane receptor for soluble GET3, which recognizes and selectively binds the transmembrane domain of TA proteins in the cytosol. The GET complex cooperates with the HDEL receptor ERD2 to mediate the ATP-dependent retrieval of resident ER proteins that contain a C-terminal H-D-E-L retention signal from the Golgi to the ER. The polypeptide is Golgi to ER traffic protein 2 (Kluyveromyces lactis (strain ATCC 8585 / CBS 2359 / DSM 70799 / NBRC 1267 / NRRL Y-1140 / WM37) (Yeast)).